We begin with the raw amino-acid sequence, 383 residues long: Succinyl-diaminopimelate desuccinylase (383 aa).

Histidine 69 is a binding site for Zn(2+). The active site involves aspartate 71. Aspartate 103 is a Zn(2+) binding site. Glutamate 137 (proton acceptor) is an active-site residue. Glutamate 138, glutamate 166, and histidine 357 together coordinate Zn(2+).

This sequence belongs to the peptidase M20A family. DapE subfamily. Homodimer. Zn(2+) is required as a cofactor. Requires Co(2+) as cofactor.

It catalyses the reaction N-succinyl-(2S,6S)-2,6-diaminopimelate + H2O = (2S,6S)-2,6-diaminopimelate + succinate. It participates in amino-acid biosynthesis; L-lysine biosynthesis via DAP pathway; LL-2,6-diaminopimelate from (S)-tetrahydrodipicolinate (succinylase route): step 3/3. Its function is as follows. Catalyzes the hydrolysis of N-succinyl-L,L-diaminopimelic acid (SDAP), forming succinate and LL-2,6-diaminopimelate (DAP), an intermediate involved in the bacterial biosynthesis of lysine and meso-diaminopimelic acid, an essential component of bacterial cell walls. In Rickettsia prowazekii (strain Madrid E), this protein is Succinyl-diaminopimelate desuccinylase.